Reading from the N-terminus, the 349-residue chain is MSETQSWSSVLIALLAREDLSVADASWAMRQVMTGEATDAQIAAFLIALRAKGETVDEIVGFRDAVLDHAVGLPVNSMALDIVGTGGDRFGTVNISTTAAIVAAGAGVPVIKHGNRAASSSSGSSDVLAALGIDLTLPPERVAEVLRATGITFAFASAFHPGFANAAAVRSQLGVPTVFNILGPLCNPARPEASAVGVAPLDRVPLIVGVFQTRGATALVFRGDDGLDELSTTGHSHVWEVSRGLVTEHDIDPRDLGLPTAQIEDLLGKDAAHNAAVVRAVLAGQEGPVRDIVVLNAAAGLVSYELAADPSRVQEPILDRFRSHMAVAAEAIDSGAAVSKLEEWVAATR.

Residues Gly84, Gly87–Asp88, Thr92, Asn94–Thr97, Lys112–Ser120, and Ser124 each bind 5-phospho-alpha-D-ribose 1-diphosphate. Residue Gly84 coordinates anthranilate. Ser96 contacts Mg(2+). Asn115 serves as a coordination point for anthranilate. Arg170 contributes to the anthranilate binding site. Residues Asp228 and Glu229 each coordinate Mg(2+).

It belongs to the anthranilate phosphoribosyltransferase family. As to quaternary structure, homodimer. Requires Mg(2+) as cofactor.

It carries out the reaction N-(5-phospho-beta-D-ribosyl)anthranilate + diphosphate = 5-phospho-alpha-D-ribose 1-diphosphate + anthranilate. It functions in the pathway amino-acid biosynthesis; L-tryptophan biosynthesis; L-tryptophan from chorismate: step 2/5. In terms of biological role, catalyzes the transfer of the phosphoribosyl group of 5-phosphorylribose-1-pyrophosphate (PRPP) to anthranilate to yield N-(5'-phosphoribosyl)-anthranilate (PRA). The sequence is that of Anthranilate phosphoribosyltransferase from Leifsonia xyli subsp. xyli (strain CTCB07).